Reading from the N-terminus, the 203-residue chain is ATP-dependent Clp protease proteolytic subunit 1 (203 aa).

Residue Ser101 is the Nucleophile of the active site. The active site involves His126.

The protein belongs to the peptidase S14 family. Fourteen ClpP subunits assemble into 2 heptameric rings which stack back to back to give a disk-like structure with a central cavity, resembling the structure of eukaryotic proteasomes.

It is found in the cytoplasm. The enzyme catalyses Hydrolysis of proteins to small peptides in the presence of ATP and magnesium. alpha-casein is the usual test substrate. In the absence of ATP, only oligopeptides shorter than five residues are hydrolyzed (such as succinyl-Leu-Tyr-|-NHMec, and Leu-Tyr-Leu-|-Tyr-Trp, in which cleavage of the -Tyr-|-Leu- and -Tyr-|-Trp bonds also occurs).. In terms of biological role, cleaves peptides in various proteins in a process that requires ATP hydrolysis. Has a chymotrypsin-like activity. Plays a major role in the degradation of misfolded proteins. The chain is ATP-dependent Clp protease proteolytic subunit 1 from Synechococcus sp. (strain JA-3-3Ab) (Cyanobacteria bacterium Yellowstone A-Prime).